Here is a 506-residue protein sequence, read N- to C-terminus: Maturase K (506 aa).

Belongs to the intron maturase 2 family. MatK subfamily.

Its subcellular location is the plastid. The protein localises to the chloroplast. Usually encoded in the trnK tRNA gene intron. Probably assists in splicing its own and other chloroplast group II introns. This is Maturase K from Erica tetralix (Cross-leaved heath).